We begin with the raw amino-acid sequence, 336 residues long: Oxaloacetate decarboxylase (336 aa).

A Pyruvate carboxyltransferase domain is found at 10–258 (PIVLDTTVRD…LAAVDLDRIF (249 aa)). Asp-19, His-197, and His-199 together coordinate Mn(2+).

This sequence belongs to the 4-hydroxy-2-oxovalerate aldolase family. In terms of assembly, homodimer. Requires a divalent metal cation as cofactor.

The enzyme catalyses oxaloacetate + H(+) = pyruvate + CO2. Activity is abolished upon incubation with Chelex and EDTA. Its function is as follows. Exhibits oxaloacetate decarboxylase activity. Lacks any detectable aldolase activity with 4-hydroxy-2-oxopentanoate (HOPA), 4-hydroxy-2-oxohexanoate (HOHA) or other 4-hydroxy-2-oxoacids. The sequence is that of Oxaloacetate decarboxylase from Mycobacterium tuberculosis (strain ATCC 25618 / H37Rv).